Here is a 205-residue protein sequence, read N- to C-terminus: NADH-quinone oxidoreductase subunit C (205 aa).

This sequence belongs to the complex I 30 kDa subunit family. NDH-1 is composed of 14 different subunits. Subunits NuoB, C, D, E, F, and G constitute the peripheral sector of the complex.

It localises to the cell inner membrane. It carries out the reaction a quinone + NADH + 5 H(+)(in) = a quinol + NAD(+) + 4 H(+)(out). Functionally, NDH-1 shuttles electrons from NADH, via FMN and iron-sulfur (Fe-S) centers, to quinones in the respiratory chain. The immediate electron acceptor for the enzyme in this species is believed to be ubiquinone. Couples the redox reaction to proton translocation (for every two electrons transferred, four hydrogen ions are translocated across the cytoplasmic membrane), and thus conserves the redox energy in a proton gradient. This chain is NADH-quinone oxidoreductase subunit C, found in Nitrosospira multiformis (strain ATCC 25196 / NCIMB 11849 / C 71).